Consider the following 769-residue polypeptide: Spastin (769 aa).

Positions 1-100 (MVRTKNQSSS…TSGNVPRGGQ (100 aa)) are disordered. The Cytoplasmic portion of the chain corresponds to 1–113 (MVRTKNQSSS…KQNLYVVSFP (113 aa)). Residues 1 to 201 (MVRTKNQSSS…QTLEMAASRG (201 aa)) are required for localization to punctate cytoplasmic foci. Residues 8–19 (SSSSSASSSTKS) show a composition bias toward low complexity. The span at 24–33 (SGGGGGGGGS) shows a compositional bias: gly residues. Residues 54 to 63 (SSKLSSNRQR) show a composition bias toward polar residues. Residues 64 to 78 (TTTTITTTTTTPGSS) show a composition bias toward low complexity. Positions 114 to 134 (IIFLFNVLRSLIYQLFCIFRY) form an intramembrane region, helical. At 135–769 (LYGASTKVIY…WSQDYGDITI (635 aa)) the chain is on the cytoplasmic side. The segment at 199–769 (SRGGTGAGGY…WSQDYGDITI (571 aa)) is sufficient for interaction with microtubules and microtubule severing. The region spanning 224–299 (HRRAFEYISK…SMARDRLHFL (76 aa)) is the MIT domain. Positions 314–462 (KEQPKKQLPH…NAASGSGSGA (149 aa)) are disordered. Low complexity predominate over residues 334-344 (TTTSSGSSSSS). Polar residues-rich tracts occupy residues 395–413 (NKSQ…STSV) and 434–450 (QFSS…RTPI). Residues 451–462 (NNNAASGSGSGA) are compositionally biased toward low complexity. Residues 452 to 466 (NNAASGSGSGASTPL) form a required for interaction with microtubules region. 534-541 (GPPGNGKT) contributes to the ATP binding site.

This sequence belongs to the AAA ATPase family. Spastin subfamily. Homohexamer. The homohexamer is stabilized by ATP-binding. The homohexamer may adopt a ring conformation through which microtubules pass prior to being severed. Interacts with microtubules. Interacts with atl; may be involved in microtubule dynamics.

Its subcellular location is the membrane. It is found in the cytoplasm. The protein resides in the cytoskeleton. The protein localises to the microtubule organizing center. It localises to the centrosome. Its subcellular location is the chromosome. It is found in the lipid droplet. It carries out the reaction n ATP + n H2O + a microtubule = n ADP + n phosphate + (n+1) alpha/beta tubulin heterodimers.. In terms of biological role, ATP-dependent microtubule severing protein. Stimulates microtubule minus-end depolymerization and poleward microtubule flux in the mitotic spindle. Regulates microtubule stability in the neuromuscular junction synapse. Involved in lipid metabolism by regulating the size and distribution of lipid droplets. Involved in axon regeneration by regulating microtubule severing. The chain is Spastin from Drosophila virilis (Fruit fly).